Here is a 208-residue protein sequence, read N- to C-terminus: Imidazoleglycerol-phosphate dehydratase (208 aa).

The disordered stretch occupies residues 1 to 22; it reads MTEDTETSSTGAGADDRTAAIS.

Belongs to the imidazoleglycerol-phosphate dehydratase family.

It localises to the cytoplasm. The enzyme catalyses D-erythro-1-(imidazol-4-yl)glycerol 3-phosphate = 3-(imidazol-4-yl)-2-oxopropyl phosphate + H2O. It participates in amino-acid biosynthesis; L-histidine biosynthesis; L-histidine from 5-phospho-alpha-D-ribose 1-diphosphate: step 6/9. The sequence is that of Imidazoleglycerol-phosphate dehydratase from Haloquadratum walsbyi (strain DSM 16790 / HBSQ001).